Reading from the N-terminus, the 470-residue chain is ATP synthase subunit beta (470 aa).

155–162 (GGAGVGKT) provides a ligand contact to ATP.

Belongs to the ATPase alpha/beta chains family. F-type ATPases have 2 components, CF(1) - the catalytic core - and CF(0) - the membrane proton channel. CF(1) has five subunits: alpha(3), beta(3), gamma(1), delta(1), epsilon(1). CF(0) has three main subunits: a(1), b(2) and c(9-12). The alpha and beta chains form an alternating ring which encloses part of the gamma chain. CF(1) is attached to CF(0) by a central stalk formed by the gamma and epsilon chains, while a peripheral stalk is formed by the delta and b chains.

Its subcellular location is the cell membrane. It catalyses the reaction ATP + H2O + 4 H(+)(in) = ADP + phosphate + 5 H(+)(out). Its function is as follows. Produces ATP from ADP in the presence of a proton gradient across the membrane. The catalytic sites are hosted primarily by the beta subunits. The protein is ATP synthase subunit beta of Pectinatus frisingensis.